A 154-amino-acid chain; its full sequence is Ribosomal RNA large subunit methyltransferase H (154 aa).

Residues Gly-103 and 122-127 (FSKLTF) contribute to the S-adenosyl-L-methionine site.

This sequence belongs to the RNA methyltransferase RlmH family. In terms of assembly, homodimer.

The protein resides in the cytoplasm. It carries out the reaction pseudouridine(1915) in 23S rRNA + S-adenosyl-L-methionine = N(3)-methylpseudouridine(1915) in 23S rRNA + S-adenosyl-L-homocysteine + H(+). In terms of biological role, specifically methylates the pseudouridine at position 1915 (m3Psi1915) in 23S rRNA. This chain is Ribosomal RNA large subunit methyltransferase H, found in Caldicellulosiruptor bescii (strain ATCC BAA-1888 / DSM 6725 / KCTC 15123 / Z-1320) (Anaerocellum thermophilum).